Here is a 61-residue protein sequence, read N- to C-terminus: Large ribosomal subunit protein bL32 (61 aa).

Residues 1–16 (MAVPKKKTSKSRKNMR) are compositionally biased toward basic residues. The interval 1 to 20 (MAVPKKKTSKSRKNMRRAHD) is disordered.

It belongs to the bacterial ribosomal protein bL32 family.

This is Large ribosomal subunit protein bL32 from Trichlorobacter lovleyi (strain ATCC BAA-1151 / DSM 17278 / SZ) (Geobacter lovleyi).